Here is a 266-residue protein sequence, read N- to C-terminus: Electron transfer flavoprotein subunit beta (266 aa).

The protein belongs to the ETF beta-subunit/FixA family. In terms of assembly, heterodimer of an alpha and a beta subunit. The cofactor is FAD. AMP is required as a cofactor.

Functionally, the electron transfer flavoprotein serves as a specific electron acceptor for other dehydrogenases. It transfers the electrons to the main respiratory chain via ETF-ubiquinone oxidoreductase (ETF dehydrogenase). The protein is Electron transfer flavoprotein subunit beta (etfB) of Mycobacterium bovis (strain ATCC BAA-935 / AF2122/97).